A 312-amino-acid chain; its full sequence is Probable rRNA-processing protein EBP2 (312 aa).

A disordered region spans residues 1–32; that stretch reads MLHHEDESSPESDSDFDASELTDKELQEAFSQ. The segment covering 8 to 20 has biased composition (acidic residues); it reads SSPESDSDFDASE. A coiled-coil region spans residues 140–176; the sequence is EMAKTDQHMQKIRHKLQLKQASMEKSEKAKQLRALRK. A disordered region spans residues 211-312; the sequence is LDFLEGDQTP…VRQKMKSKRR (102 aa). Residues 282–312 show a composition bias toward basic residues; it reads KGPHRPGKKGGKNANKRPGKNVRQKMKSKRR.

It belongs to the EBP2 family.

The protein localises to the nucleus. The protein resides in the nucleolus. Required for the processing of the 27S pre-rRNA. The chain is Probable rRNA-processing protein EBP2 (ebna1bp2) from Xenopus laevis (African clawed frog).